The chain runs to 350 residues: Ion-translocating oxidoreductase complex subunit D (350 aa).

A run of 4 helical transmembrane segments spans residues 37-57, 78-109, 124-144, and 158-178; these read YYFG…AYLA, ALVT…IVIV, AMAA…SWVA, and TFNS…HLAI. FMN phosphoryl threonine is present on Thr185. Transmembrane regions (helical) follow at residues 212–232, 239–259, 264–284, 298–318, and 319–339; these read SVGE…LVML, WHIS…GFLI, FVSP…FFIA, LIFG…GGYP, and DAVA…DYYV.

It belongs to the NqrB/RnfD family. As to quaternary structure, the complex is composed of six subunits: RnfA, RnfB, RnfC, RnfD, RnfE and RnfG. FMN serves as cofactor.

The protein resides in the cell inner membrane. Part of a membrane-bound complex that couples electron transfer with translocation of ions across the membrane. The protein is Ion-translocating oxidoreductase complex subunit D of Shewanella frigidimarina (strain NCIMB 400).